A 206-amino-acid chain; its full sequence is Phosphatidyl-N-methylethanolamine N-methyltransferase (206 aa).

The Lumenal segment spans residues 1 to 20 (MKESVQEIIQQLIHSVDLQS). The segment at residues 21–41 (SKFQLAIVCTMFNPIFWNIVA) is an intramembrane region (helical). Topologically, residues 42-53 (RMEYHKHSLTKM) are lumenal. Residues 54–74 (CGGARKGCYMLAATIFSLGIV) form a helical membrane-spanning segment. Topologically, residues 75-101 (RDMVYESALREQPTCSLITGENWTKLG) are cytoplasmic. The helical transmembrane segment at 102 to 122 (VALFGLGQVLVLSSMYKLGIT) threads the bilayer. 106–108 (GLG) is an S-adenosyl-L-methionine binding site. Residues 123–165 (GTYLGDYFGILMDERVTGFPFNVSNNPMYQGSTLSFLGIALYK) lie on the Lumenal side of the membrane. The chain crosses the membrane as a helical span at residues 166–186 (GKPAGLVVSAVVYFMYKIALR). Residues 187–206 (WEEPFTAMIYANRDKAKKNM) lie on the Cytoplasmic side of the membrane. 188–189 (EE) contributes to the S-adenosyl-L-methionine binding site.

This sequence belongs to the class VI-like SAM-binding methyltransferase superfamily. PEMT/PEM2 methyltransferase family.

Its subcellular location is the endoplasmic reticulum membrane. It is found in the mitochondrion membrane. The catalysed reaction is a 1,2-diacyl-sn-glycero-3-phosphoethanolamine + S-adenosyl-L-methionine = a 1,2-diacyl-sn-glycero-3-phospho-N-methylethanolamine + S-adenosyl-L-homocysteine + H(+). The enzyme catalyses a 1,2-diacyl-sn-glycero-3-phospho-N-methylethanolamine + S-adenosyl-L-methionine = a 1,2-diacyl-sn-glycero-3-phospho-N,N-dimethylethanolamine + S-adenosyl-L-homocysteine + H(+). It carries out the reaction a 1,2-diacyl-sn-glycero-3-phospho-N,N-dimethylethanolamine + S-adenosyl-L-methionine = a 1,2-diacyl-sn-glycero-3-phosphocholine + S-adenosyl-L-homocysteine + H(+). It functions in the pathway phospholipid metabolism; phosphatidylcholine biosynthesis. Functionally, catalyzes the second two steps of the methylation pathway of phosphatidylcholine biosynthesis, the SAM-dependent methylation of phosphatidylmonomethylethanolamine (PMME) to phosphatidyldimethylethanolamine (PDME) and of PDME to phosphatidylcholine (PC). Can also catalyze the first methylation reaction of PE to PMME in the absence of PE methyltransferase CHO2. The chain is Phosphatidyl-N-methylethanolamine N-methyltransferase from Saccharomyces cerevisiae (strain ATCC 204508 / S288c) (Baker's yeast).